Here is a 704-residue protein sequence, read N- to C-terminus: G-protein coupled receptor-associated protein LMBRD2B (704 aa).

Residues 1-3 are Extracellular-facing; the sequence is MSG. Residues 4–21 traverse the membrane as a helical segment; it reads AALGIEIVVVFFLALFLL. Over 22–33 the chain is Cytoplasmic; it reads HRYGDFKKQQRM. The chain crosses the membrane as a helical span at residues 34 to 54; it reads VLFGTLLAWYLCFLIVFILPL. The Extracellular segment spans residues 55-111; sequence DVSTTIYNQCLIDQEAQTQTPSVSPVLSEQTTANASISPAKSTQRVCYKPWSYIPDG. N-linked (GlcNAc...) asparagine glycosylation occurs at Asn-88. The chain crosses the membrane as a helical span at residues 112 to 132; it reads IMPVFWRVVYWTSQCLTWLLL. At 133-157 the chain is on the cytoplasmic side; the sequence is PFMQSYARSGGFTITGKIKTALIEN. The chain crosses the membrane as a helical span at residues 158-178; sequence AIYYGTYLFIFGSLLIYVAVH. The Extracellular segment spans residues 179 to 192; sequence PQWHLSWYELQTIG. Residues 193-213 form a helical membrane-spanning segment; that stretch reads ITAANTWGLFLLVLLLGYGLV. Topologically, residues 214 to 393 are cytoplasmic; that stretch reads DIPRSYWEAS…ECLLKQWFYR (180 aa). Positions 235-266 form a coiled coil; it reads KAAKLMTEKADSEENLEDVMEEVRKINESIKY. A helical membrane pass occupies residues 394–414; the sequence is VLAVVLALFSVAVVWSECTFF. Topologically, residues 415-438 are extracellular; sequence STHPVLSLFAVFIQLAERDYNYLY. The chain crosses the membrane as a helical span at residues 439–459; the sequence is IEMACFITIFFLCTCVYSTVF. The Cytoplasmic segment spans residues 460-481; the sequence is RIRVFNYYYLASHHQTDAYSLQ. A helical membrane pass occupies residues 482 to 502; sequence FSGMLFCRLTPPLCLNFLGLI. The Extracellular segment spans residues 503–527; sequence HMDSAISHQAKKQTAYTSIMGSMRV. Residues 528-548 form a helical membrane-spanning segment; it reads LSFIANGFYIYYPMLIVVLCI. Residues 549–704 are Cytoplasmic-facing; the sequence is ATYFSLGTRC…SSRNRIFDDV (156 aa). The stretch at 576–612 forms a coiled coil; the sequence is DLIDEGRELLRRERRKRQRIEDGENRRREWRERYAQR. Disordered stretches follow at residues 613–654 and 672–704; these read DENA…QSGR and TLTDDPLQSDTGRHAGGRYLSMSSSRNRIFDDV. Positions 631-654 are enriched in polar residues; the sequence is YGETLNANTNRQAKYTRSGSQSGR.

It belongs to the LIMR family.

Its subcellular location is the cell membrane. Its function is as follows. May associate with G-protein coupled receptors and regulate downstream signaling pathways. The chain is G-protein coupled receptor-associated protein LMBRD2B (lmbrd2b) from Danio rerio (Zebrafish).